Reading from the N-terminus, the 448-residue chain is Probable glycine dehydrogenase (decarboxylating) subunit 1 (448 aa).

The protein belongs to the GcvP family. N-terminal subunit subfamily. The glycine cleavage system is composed of four proteins: P, T, L and H. In this organism, the P 'protein' is a heterodimer of two subunits.

The catalysed reaction is N(6)-[(R)-lipoyl]-L-lysyl-[glycine-cleavage complex H protein] + glycine + H(+) = N(6)-[(R)-S(8)-aminomethyldihydrolipoyl]-L-lysyl-[glycine-cleavage complex H protein] + CO2. The glycine cleavage system catalyzes the degradation of glycine. The P protein binds the alpha-amino group of glycine through its pyridoxal phosphate cofactor; CO(2) is released and the remaining methylamine moiety is then transferred to the lipoamide cofactor of the H protein. The chain is Probable glycine dehydrogenase (decarboxylating) subunit 1 from Bacillus velezensis (strain DSM 23117 / BGSC 10A6 / LMG 26770 / FZB42) (Bacillus amyloliquefaciens subsp. plantarum).